Consider the following 82-residue polypeptide: CLAVATA3/ESR (CLE)-related protein 53 (82 aa).

The N-terminal stretch at 1-26 is a signal peptide; sequence MATSTNSREFLIFICVLTLLVVRSEA. Residues P74 and P77 each carry the hydroxyproline modification. Residue P77 is glycosylated (O-linked (Ara...) hydroxyproline).

Belongs to the CLV3/ESR signal peptide family. The O-glycosylation (arabinosylation) of the hydroxyproline Pro-77 enhances binding affinity of the CLE53p peptide for its receptor. In terms of tissue distribution, expressed in root vasculature.

The protein localises to the secreted. The protein resides in the extracellular space. In terms of biological role, signaling peptide involved in the regulation of root colonization by arbuscular mycorrhizal (AM) fungi. Moves from root to shoot to function with the receptor kinase SUNN, in a signaling pathway that repress strigolactone biosynthetic genes and strigolactone content in the roots, and consequently reduces the promotion of further colonization by AM fungi. The polypeptide is CLAVATA3/ESR (CLE)-related protein 53 (Medicago truncatula (Barrel medic)).